Here is a 494-residue protein sequence, read N- to C-terminus: Probable cytosol aminopeptidase (494 aa).

2 residues coordinate Mn(2+): K260 and D265. K272 is an active-site residue. D283, D342, and E344 together coordinate Mn(2+). The active site involves R346.

It belongs to the peptidase M17 family. Mn(2+) is required as a cofactor.

The protein localises to the cytoplasm. The enzyme catalyses Release of an N-terminal amino acid, Xaa-|-Yaa-, in which Xaa is preferably Leu, but may be other amino acids including Pro although not Arg or Lys, and Yaa may be Pro. Amino acid amides and methyl esters are also readily hydrolyzed, but rates on arylamides are exceedingly low.. It carries out the reaction Release of an N-terminal amino acid, preferentially leucine, but not glutamic or aspartic acids.. Presumably involved in the processing and regular turnover of intracellular proteins. Catalyzes the removal of unsubstituted N-terminal amino acids from various peptides. This chain is Probable cytosol aminopeptidase, found in Bacillus thuringiensis subsp. konkukian (strain 97-27).